A 323-amino-acid chain; its full sequence is Rhazimal reductase 2 (323 aa).

Aspartate 53 is a binding site for NADP(+). Tyrosine 58 acts as the Proton donor in catalysis. NADP(+) is bound by residues 167-168 (SN), glutamine 189, 215-220 (WSPLLS), and 289-297 (DQIQQIPQR).

The protein belongs to the aldo/keto reductase family. In terms of assembly, monomer.

The enzyme catalyses rhazimol + NADP(+) = rhazimal + NADPH + 2 H(+). It participates in alkaloid biosynthesis. Functionally, oxidoreductase involved in the biosynthesis of akuammilan monoterpene indole alkaloids (MIAs) natural products, components with various biological properties such as antidiabetic, antibacterial, anti-inflammatory, anticancer, and antimalarial activities. Catalyzes the conversion of rhazimal to rhazimol. The polypeptide is Rhazimal reductase 2 (Alstonia scholaris (Dogbane)).